We begin with the raw amino-acid sequence, 427 residues long: Protein phosphatase methylesterase 1 (427 aa).

The segment at 1–49 is disordered; that stretch reads MSELQKSFAKAKLAKLPPEAPPFSMHPPRDEDDSESASSTGTVVPSPSR. Residues 36 to 49 are compositionally biased toward polar residues; sequence SASSTGTVVPSPSR. Residues Ser207, Asp233, and His364 contribute to the active site. The segment at 402–427 is disordered; it reads SAAMKQGAEAGAVPPFGRGQGSSHKP.

This sequence belongs to the AB hydrolase superfamily.

It carries out the reaction [phosphatase 2A protein]-C-terminal L-leucine methyl ester + H2O = [phosphatase 2A protein]-C-terminal L-leucine + methanol + H(+). Functionally, demethylates proteins that have been reversibly carboxymethylated. Demethylates the phosphatase PP2A catalytic subunit. The protein is Protein phosphatase methylesterase 1 (ppe1) of Aspergillus oryzae (strain ATCC 42149 / RIB 40) (Yellow koji mold).